A 50-amino-acid chain; its full sequence is Penaeidin-1 (50 aa).

Cystine bridges form between C25/C38, C27/C45, and C39/C46.

Higher expression in hemocytes and to a lesser extent in heart, testis, gills, intestine, lymphoid organ and hepatopancreas. Traces in eyes and subcuticular epithelium. Not present in the brain.

The protein resides in the cytoplasmic granule. In terms of biological role, antibacterial activity against M.luteus and E.coli bacteria. Antifungal activity against N.crassa and F.oxysporum. Presents chitin-binding activity. The chain is Penaeidin-1 from Penaeus vannamei (Whiteleg shrimp).